The chain runs to 182 residues: Probable tryptophan transport protein (182 aa).

4 helical membrane passes run 10–32 (ITIN…VLGL), 55–75 (ITMV…KFPG), 119–141 (IVLP…IIVG), and 146–168 (FSIL…GLVL).

Belongs to the vitamin uptake transporter (VUT/ECF) (TC 2.A.88) family. TrpP subfamily.

Its subcellular location is the cell membrane. Functionally, probably involved in tryptophan uptake. This is Probable tryptophan transport protein (trpP) from Clostridium perfringens (strain 13 / Type A).